The sequence spans 110 residues: uncharacterized protein (110 aa).

Residues 16-46 (ELDKLRECEERLSVIEKQKQSSKQESEETYI) adopt a coiled-coil conformation. A compositionally biased stretch (basic and acidic residues) spans 85–96 (EEKDKKCQRKPE). The interval 85 to 110 (EEKDKKCQRKPEAPSTPAVTIRSKRQ) is disordered.

This is an uncharacterized protein from Bacillus subtilis (strain 168).